Consider the following 140-residue polypeptide: Large ribosomal subunit protein bL17 (140 aa).

It belongs to the bacterial ribosomal protein bL17 family. In terms of assembly, part of the 50S ribosomal subunit. Contacts protein L32.

This is Large ribosomal subunit protein bL17 from Methylobacterium nodulans (strain LMG 21967 / CNCM I-2342 / ORS 2060).